The following is a 537-amino-acid chain: Phosphoenolpyruvate carboxykinase (ATP) (537 aa).

Residues R61, Y194, and K200 each coordinate substrate. Residues K200, H219, and 235-243 (GLSGTGKTT) contribute to the ATP site. The Mn(2+) site is built by K200 and H219. Residue D256 coordinates Mn(2+). Residues E284, R322, and T448 each contribute to the ATP site. Residue R322 coordinates substrate.

Belongs to the phosphoenolpyruvate carboxykinase (ATP) family. Mn(2+) serves as cofactor.

The protein localises to the cytoplasm. It catalyses the reaction oxaloacetate + ATP = phosphoenolpyruvate + ADP + CO2. It functions in the pathway carbohydrate biosynthesis; gluconeogenesis. Its function is as follows. Involved in the gluconeogenesis. Catalyzes the conversion of oxaloacetate (OAA) to phosphoenolpyruvate (PEP) through direct phosphoryl transfer between the nucleoside triphosphate and OAA. In Bradyrhizobium sp. (strain BTAi1 / ATCC BAA-1182), this protein is Phosphoenolpyruvate carboxykinase (ATP).